Here is a 354-residue protein sequence, read N- to C-terminus: Fructose-bisphosphate aldolase 2 (354 aa).

Position 50 (S50) interacts with D-glyceraldehyde 3-phosphate. D83 acts as the Proton donor in catalysis. 4 residues coordinate Zn(2+): H84, D105, E142, and H198. Position 199 (G199) interacts with dihydroxyacetone phosphate. H232 contacts Zn(2+). Dihydroxyacetone phosphate-binding positions include 233 to 235 (GSS) and 275 to 278 (NIDT).

This sequence belongs to the class II fructose-bisphosphate aldolase family. As to quaternary structure, homodimer. The cofactor is Zn(2+).

The enzyme catalyses beta-D-fructose 1,6-bisphosphate = D-glyceraldehyde 3-phosphate + dihydroxyacetone phosphate. Its pathway is carbohydrate biosynthesis; Calvin cycle. The protein operates within carbohydrate degradation; glycolysis; D-glyceraldehyde 3-phosphate and glycerone phosphate from D-glucose: step 4/4. Functionally, catalyzes the aldol condensation of dihydroxyacetone phosphate (DHAP or glycerone-phosphate) with glyceraldehyde 3-phosphate (G3P) to form fructose 1,6-bisphosphate (FBP) in gluconeogenesis and the reverse reaction in glycolysis. The protein is Fructose-bisphosphate aldolase 2 (cfxB) of Cereibacter sphaeroides (Rhodobacter sphaeroides).